Here is a 152-residue protein sequence, read N- to C-terminus: Phospholipase A2 (152 aa).

The first 20 residues, 1–20 (MAACHRILLLLSVAVASGAA), serve as a signal peptide directing secretion. Cystine bridges form between C39-C96, C53-C142, C55-C70, C69-C124, C75-C149, C76-C117, C85-C110, and C103-C115. The Ca(2+) site is built by G56 and G58. Residue H73 is part of the active site. D74 is a Ca(2+) binding site. D118 is a catalytic residue.

This sequence belongs to the phospholipase A2 family. Expressed by the venom gland. Heavily expressed in the venom gland transcriptome.

Its subcellular location is the secreted. The enzyme catalyses a 1,2-diacyl-sn-glycero-3-phosphocholine + H2O = a 1-acyl-sn-glycero-3-phosphocholine + a fatty acid + H(+). Functionally, PA2 catalyzes the calcium-dependent hydrolysis of the 2-acyl groups in 3-sn-phosphoglycerides. This chain is Phospholipase A2, found in Meiacanthus atrodorsalis (Forktail blenny).